The following is a 474-amino-acid chain: Cytochrome c biogenesis protein CcsB (474 aa).

Helical transmembrane passes span 36–56 (LKLA…GTVI), 96–116 (SWWF…CTFR), and 182–202 (VGPI…MIGA).

This sequence belongs to the Ccs1/CcsB family. As to quaternary structure, may interact with CcsA.

The protein resides in the cell inner membrane. Required during biogenesis of c-type cytochromes (cytochrome c6 and cytochrome f) at the step of heme attachment. This Gloeobacter violaceus (strain ATCC 29082 / PCC 7421) protein is Cytochrome c biogenesis protein CcsB.